We begin with the raw amino-acid sequence, 103 residues long: PTS system lactose-specific EIIA component (103 aa).

A PTS EIIA type-3 domain is found at 1–102; the sequence is MNREEVQLLG…MKHLLEFYKR (102 aa). Catalysis depends on His78, which acts as the Tele-phosphohistidine intermediate. A Phosphohistidine; by HPr modification is found at His78. Mg(2+) is bound at residue Asp81.

Homotrimer. It depends on Mg(2+) as a cofactor.

It localises to the cytoplasm. The phosphoenolpyruvate-dependent sugar phosphotransferase system (sugar PTS), a major carbohydrate active transport system, catalyzes the phosphorylation of incoming sugar substrates concomitantly with their translocation across the cell membrane. The enzyme II LacEF PTS system is involved in lactose transport. This chain is PTS system lactose-specific EIIA component, found in Staphylococcus aureus (strain COL).